A 472-amino-acid polypeptide reads, in one-letter code: Nuclear hormone receptor family member nhr-2 (472 aa).

Polar residues-rich tracts occupy residues threonine 57–isoleucine 83, asparagine 90–proline 112, leucine 138–asparagine 147, and valine 159–threonine 171. 2 disordered regions span residues threonine 57–proline 112 and leucine 138–threonine 184. The segment at residues lysine 215–valine 297 is a DNA-binding region (nuclear receptor). NR C4-type zinc fingers lie at residues cysteine 218–cysteine 238 and cysteine 267–cysteine 285.

It belongs to the nuclear hormone receptor family.

Its subcellular location is the nucleus. Functionally, orphan nuclear receptor. This is Nuclear hormone receptor family member nhr-2 (nhr-2) from Caenorhabditis elegans.